The sequence spans 556 residues: Arginine--tRNA ligase (556 aa).

Residues 132-142 carry the 'HIGH' region motif; that stretch reads ANPTGDLHLGH.

It belongs to the class-I aminoacyl-tRNA synthetase family. As to quaternary structure, monomer.

It localises to the cytoplasm. The enzyme catalyses tRNA(Arg) + L-arginine + ATP = L-arginyl-tRNA(Arg) + AMP + diphosphate. This chain is Arginine--tRNA ligase, found in Bacillus velezensis (strain DSM 23117 / BGSC 10A6 / LMG 26770 / FZB42) (Bacillus amyloliquefaciens subsp. plantarum).